Here is a 61-residue protein sequence, read N- to C-terminus: Small ribosomal subunit protein uS14 (61 aa).

Zn(2+) contacts are provided by Cys-24, Cys-27, Cys-40, and Cys-43.

The protein belongs to the universal ribosomal protein uS14 family. Zinc-binding uS14 subfamily. As to quaternary structure, part of the 30S ribosomal subunit. Contacts proteins S3 and S10. Zn(2+) is required as a cofactor.

Its function is as follows. Binds 16S rRNA, required for the assembly of 30S particles and may also be responsible for determining the conformation of the 16S rRNA at the A site. The chain is Small ribosomal subunit protein uS14 from Geobacillus thermodenitrificans (strain NG80-2).